A 441-amino-acid chain; its full sequence is Importin subunit alpha-8 (441 aa).

ARM repeat units lie at residues 39–79 (QRDI…NIAV), 80–118 (DNPG…NVAG), 121–158 (IHYR…NLCR), 160–199 (KPHP…HLSE), 202–241 (EDGI…AMTA), 244–284 (HQQT…NITA), 287–326 (KEQI…NMAL), and 330–370 (HDQI…NMLK).

It belongs to the importin alpha family. Forms a complex with importin subunit beta-1.

The protein resides in the nucleus envelope. Binds to conventional NLS motifs and mediates nuclear protein import across the nuclear envelope. This Arabidopsis thaliana (Mouse-ear cress) protein is Importin subunit alpha-8.